Here is a 288-residue protein sequence, read N- to C-terminus: uncharacterized protein (288 aa).

A run of 4 helical transmembrane segments spans residues 43 to 63, 190 to 210, 243 to 263, and 265 to 285; these read LFTL…NYII, LFIF…FLLE, GIPI…SILI, and LLQM…NKSL.

Its subcellular location is the cell membrane. This is an uncharacterized protein from Rickettsia prowazekii (strain Madrid E).